A 342-amino-acid chain; its full sequence is Phosphate acyltransferase (342 aa).

It belongs to the PlsX family. As to quaternary structure, homodimer. Probably interacts with PlsY.

Its subcellular location is the cytoplasm. It carries out the reaction a fatty acyl-[ACP] + phosphate = an acyl phosphate + holo-[ACP]. The protein operates within lipid metabolism; phospholipid metabolism. In terms of biological role, catalyzes the reversible formation of acyl-phosphate (acyl-PO(4)) from acyl-[acyl-carrier-protein] (acyl-ACP). This enzyme utilizes acyl-ACP as fatty acyl donor, but not acyl-CoA. The sequence is that of Phosphate acyltransferase from Shewanella halifaxensis (strain HAW-EB4).